Here is a 145-residue protein sequence, read N- to C-terminus: Ribonuclease P protein component (145 aa).

Positions 119-145 are disordered; that stretch reads PLPAAPGTMPPARTVRPSSPSPTEPEL.

The protein belongs to the RnpA family. In terms of assembly, consists of a catalytic RNA component (M1 or rnpB) and a protein subunit.

The catalysed reaction is Endonucleolytic cleavage of RNA, removing 5'-extranucleotides from tRNA precursor.. Functionally, RNaseP catalyzes the removal of the 5'-leader sequence from pre-tRNA to produce the mature 5'-terminus. It can also cleave other RNA substrates such as 4.5S RNA. The protein component plays an auxiliary but essential role in vivo by binding to the 5'-leader sequence and broadening the substrate specificity of the ribozyme. This is Ribonuclease P protein component from Xanthomonas euvesicatoria pv. vesicatoria (strain 85-10) (Xanthomonas campestris pv. vesicatoria).